A 210-amino-acid chain; its full sequence is Uridine kinase (210 aa).

12–19 (GGSGSGKT) serves as a coordination point for ATP.

Belongs to the uridine kinase family.

Its subcellular location is the cytoplasm. The catalysed reaction is uridine + ATP = UMP + ADP + H(+). The enzyme catalyses cytidine + ATP = CMP + ADP + H(+). The protein operates within pyrimidine metabolism; CTP biosynthesis via salvage pathway; CTP from cytidine: step 1/3. Its pathway is pyrimidine metabolism; UMP biosynthesis via salvage pathway; UMP from uridine: step 1/1. In Bacillus pumilus (strain SAFR-032), this protein is Uridine kinase.